The chain runs to 144 residues: Bradykinin-potentiating and C-type natriuretic peptides isoform 2 (144 aa).

The N-terminal stretch at 1–23 is a signal peptide; it reads MVLSRLAASGLLLLALLALSVDG. Residues 24-30 constitute a propeptide that is removed on maturation; sequence KPVQQWA. The residue at position 31 (Gln-31) is a Pyrrolidone carboxylic acid. The propeptide occupies 41–47; it reads LLVQQWA. Gln-48 is subject to Pyrrolidone carboxylic acid. A propeptide spanning residues 61 to 67 is cleaved from the precursor; the sequence is LTVQQWA. Gln-68 carries the post-translational modification Pyrrolidone carboxylic acid. Residues 78–84 constitute a propeptide that is removed on maturation; it reads LTVQQWA. Residues 81 to 110 form a disordered region; it reads QQWAQGRPPGPPIPPLTVQQWAQARPPHPP. Position 85 is a pyrrolidone carboxylic acid (Gln-85). Positions 96–102 are excised as a propeptide; the sequence is LTVQQWA. Gln-103 carries the pyrrolidone carboxylic acid modification. Positions 114 to 116 are excised as a propeptide; that stretch reads APL. Pyrrolidone carboxylic acid is present on Gln-117. Val-122 is a propeptide. Gln-123 carries the post-translational modification Pyrrolidone carboxylic acid. A propeptide spanning residues 128–144 is cleaved from the precursor; sequence VQKWAPVQKWAPLLQPT.

This sequence in the N-terminal section; belongs to the bradykinin-potentiating peptide family. As to expression, expressed by venom gland.

The protein resides in the secreted. Its subcellular location is the cytoplasm. It is found in the cytosol. Peptide with several activities. It inhibits the activity of the angiotensin-converting enzyme (ACE) by a preferential interaction with its C-domain. It evokes transient hypotension (-14 mmHg) similar to that evoked by 0.5 ug of bradykinin, when injected alone into rats. It has a high bradykinin-potentiating effect (120%), when 60 nmol of BPP-10c are coinjected with 0.5 ug of bradykinin into rats. Does not affect angiotensin-1 pressor effects. Shows potent and long-lasting antihypertensive activity as well as a reduction of the heart rate. It also binds and dose-dependently promotes the activation of cytosolic argininosuccinate synthase (ASS1), an enzyme that catalyzes the conversion of citrulline, L-aspartate and ATP to argininosuccinate, AMP and pyrophosphate. It also enhances ASS1-dependent arginine production in HEK 293 cells, as well as in spontaneous hypertensive rat (SHR) and Wistar rat plasma. In addition, it induces the production of nitric-oxide (NO) by HUVEC cells via the endothelial nitric-oxide synthase (NOS3), which use arginine as a substrate and produce NO. It has been shown to be internalized by ASS1-expressing endothelial (HUVEC) and kidney (HEK 293) cells, and is detected homogenously distributed within the cell cytoplasm for up to 2 hours. Its function is as follows. Acts as indirect hypotensive agent. Increases leukocyte rolling flux and adhesion by five-fold in post-capillary venules, without any increments in vasodilation of arterioles. Functionally, acts as indirect hypotensive agent. Potently induces vasodilation of arterioles, with only a small increase in leukocyte rolling flux. This Bothrops jararacussu (Jararacussu) protein is Bradykinin-potentiating and C-type natriuretic peptides isoform 2.